The following is a 381-amino-acid chain: Alkanesulfonate monooxygenase (381 aa).

It belongs to the SsuD family. As to quaternary structure, homotetramer.

It carries out the reaction an alkanesulfonate + FMNH2 + O2 = an aldehyde + FMN + sulfite + H2O + 2 H(+). Functionally, catalyzes the desulfonation of aliphatic sulfonates. The chain is Alkanesulfonate monooxygenase from Escherichia coli O17:K52:H18 (strain UMN026 / ExPEC).